Here is a 691-residue protein sequence, read N- to C-terminus: Ubiquitin-like domain-containing protein CIP73 (691 aa).

One can recognise a Ubiquitin-like domain in the interval 22 to 97; it reads IEIKIKMLDS…LHLVARHPDL (76 aa). Disordered regions lie at residues 92–118, 176–203, 264–283, 432–473, 499–554, 590–624, and 645–691; these read ARHPDLTPPGSLPNHSATEPNSSTGHG, TGLGRTSDFTGNPSRPQPEQAGFRISSD, RNEERGFVSSRLSSTPEGLS, ASTT…ASIA, SVNT…SSRV, EIHVEDPSSQGTTAGVTSAATSSGAAQAPEAEPNV, and HIGR…QKME. 5 stretches are compositionally biased toward polar residues: residues 104–118, 178–189, 273–283, 446–465, and 499–523; these read PNHSATEPNSSTGHG, LGRTSDFTGNPS, SRLSSTPEGLS, TQSASVQRNTGESSVNQTTS, and SVNTNNEQGSQPASQQHTAPHSTAE. Residues 525–535 are compositionally biased toward basic and acidic residues; the sequence is TLHRQSMEDSA. Residues 536 to 554 show a composition bias toward polar residues; that stretch reads RNGTLPTPNTQQEPSSSRV. Positions 597-617 are enriched in low complexity; the sequence is SSQGTTAGVTSAATSSGAAQA.

In terms of assembly, interacts with CCAMK. In terms of processing, phosphorylated at the N-terminus by CCAMK. As to expression, highly epressed in roots. Expressed at very low levels in leaves and stems.

It is found in the nucleus. Functionally, involved in root nodulation. Required for root nodule organogenesis after infection by symbiotic rhizobia. Probably not involved in arbuscular mycorrhizal (AM) symbiosis. Acts downstream of CCAMK. This is Ubiquitin-like domain-containing protein CIP73 from Lotus japonicus (Lotus corniculatus var. japonicus).